Here is a 230-residue protein sequence, read N- to C-terminus: Small ribosomal subunit protein uS7B (230 aa).

The tract at residues 1 to 22 (MSEEVVESSSQEASQVIPQEQE) is disordered. Over residues 7-16 (ESSSQEASQV) the composition is skewed to low complexity.

Belongs to the universal ribosomal protein uS7 family.

This Drosophila melanogaster (Fruit fly) protein is Small ribosomal subunit protein uS7B (RpS5b).